A 341-amino-acid chain; its full sequence is Glycerol-3-phosphate dehydrogenase [NAD(P)+] (341 aa).

NADPH contacts are provided by serine 15, tryptophan 16, arginine 36, and lysine 110. Lysine 110, glycine 139, and serine 141 together coordinate sn-glycerol 3-phosphate. Alanine 143 contacts NADPH. Residues lysine 194, aspartate 247, serine 257, arginine 258, and asparagine 259 each coordinate sn-glycerol 3-phosphate. Residue lysine 194 is the Proton acceptor of the active site. Arginine 258 serves as a coordination point for NADPH. NADPH is bound by residues valine 282 and glutamate 284.

This sequence belongs to the NAD-dependent glycerol-3-phosphate dehydrogenase family.

The protein localises to the cytoplasm. It catalyses the reaction sn-glycerol 3-phosphate + NAD(+) = dihydroxyacetone phosphate + NADH + H(+). The catalysed reaction is sn-glycerol 3-phosphate + NADP(+) = dihydroxyacetone phosphate + NADPH + H(+). Its pathway is membrane lipid metabolism; glycerophospholipid metabolism. In terms of biological role, catalyzes the reduction of the glycolytic intermediate dihydroxyacetone phosphate (DHAP) to sn-glycerol 3-phosphate (G3P), the key precursor for phospholipid synthesis. The polypeptide is Glycerol-3-phosphate dehydrogenase [NAD(P)+] (Xanthomonas oryzae pv. oryzae (strain MAFF 311018)).